Consider the following 380-residue polypeptide: Septin homolog spn6 (380 aa).

The 271-residue stretch at 27–297 (KECGLTIMLC…ERYRREQLTN (271 aa)) folds into the Septin-type G domain. A G1 motif region spans residues 37 to 44 (GASGTGKT). Residues 37–44 (GASGTGKT), Thr-72, Gly-98, 177–185 (KADTFTTPE), and Arg-246 each bind GTP. The tract at residues 95 to 98 (DTPG) is G3 motif. Positions 176–179 (AKAD) are G4 motif. Positions 304–380 (KLKKEHYERL…KSYKGRGHKK (77 aa)) form a coiled coil.

This sequence belongs to the TRAFAC class TrmE-Era-EngA-EngB-Septin-like GTPase superfamily. Septin GTPase family. Component of the sporulation-specific septin complex composed of at least spn2, spn5, spn6 and spn7.

The protein resides in the cytoplasm. Its subcellular location is the forespore membrane. In terms of biological role, septin-like protein involved in the correct orientation of forespore membrane extension during sporulation. In Schizosaccharomyces pombe (strain 972 / ATCC 24843) (Fission yeast), this protein is Septin homolog spn6 (spn6).